Here is a 186-residue protein sequence, read N- to C-terminus: Probable GTP-binding protein EngB (186 aa).

The EngB-type G domain occupies 18–186; that stretch reads SKKEVCLIGR…LMLKIIDVIS (169 aa). Residues 26–33, 52–56, 69–72, 135–138, and 166–168 contribute to the GTP site; these read GRSNVGKS, GRTVT, DLPG, NKID, and ISA. Serine 33 and threonine 54 together coordinate Mg(2+).

It belongs to the TRAFAC class TrmE-Era-EngA-EngB-Septin-like GTPase superfamily. EngB GTPase family. The cofactor is Mg(2+).

In terms of biological role, necessary for normal cell division and for the maintenance of normal septation. This Mycoplasmoides gallisepticum (strain R(low / passage 15 / clone 2)) (Mycoplasma gallisepticum) protein is Probable GTP-binding protein EngB.